A 148-amino-acid chain; its full sequence is MNHGGNSTMRHCSMKMTFNTDYDNLCIVFKSWHIGNLSQFLLSLLAIAILGYLFERLRSFTSLKETEFQRGYAGQQSEGLLTHHSKSLKSGRPFRLCALYAVQLVFSYFLMLVAMTYNAYVILAIAIGAAFGYRRSHCDTVQTVGLCH.

Over M1–H33 the chain is Extracellular. Residues I34 to F54 traverse the membrane as a helical segment. Over E55–Y108 the chain is Cytoplasmic. Residues F109–A129 form a helical membrane-spanning segment. At A130–H148 the chain is on the extracellular side.

Belongs to the copper transporter (Ctr) (TC 1.A.56) family. SLC31A subfamily. In terms of assembly, homotrimer.

It is found in the vacuole membrane. Functionally, mobilizes stored copper from the vacuole to the cytoplasm under conditions of copper limitation. The chain is Copper transport protein ctr6 (ctr6) from Schizosaccharomyces pombe (strain 972 / ATCC 24843) (Fission yeast).